The following is a 189-amino-acid chain: Prostaglandin-H2 D-isomerase (189 aa).

Positions 1–24 are cleaved as a signal peptide; it reads MATPSSLWLGLALLGTLGVLQTPA. Q25 bears the Pyrrolidone carboxylic acid mark. The N-linked (GlcNAc...) asparagine glycan is linked to N49. C63 functions as the Nucleophile in the catalytic mechanism. N-linked (GlcNAc...) asparagine glycosylation occurs at N76. A disulfide bridge connects residues C87 and C184.

It belongs to the calycin superfamily. Lipocalin family. Monomer. In terms of tissue distribution, abundant in the brain and CNS, where it is expressed in tissues of the blood-brain barrier and secreted into the cerebro-spinal fluid.

It localises to the rough endoplasmic reticulum. The protein resides in the nucleus membrane. The protein localises to the golgi apparatus. It is found in the cytoplasm. Its subcellular location is the perinuclear region. It localises to the secreted. The enzyme catalyses prostaglandin H2 = prostaglandin D2. In terms of biological role, catalyzes the conversion of PGH2 to PGD2, a prostaglandin involved in smooth muscle contraction/relaxation and a potent inhibitor of platelet aggregation. Involved in a variety of CNS functions, such as sedation, NREM sleep and PGE2-induced allodynia, and may have an anti-apoptotic role in oligodendrocytes. Binds small non-substrate lipophilic molecules, including biliverdin, bilirubin, retinal, retinoic acid and thyroid hormone, and may act as a scavenger for harmful hydrophobic molecules and as a secretory retinoid and thyroid hormone transporter. Possibly involved in development and maintenance of the blood-brain, blood-retina, blood-aqueous humor and blood-testis barrier. It is likely to play important roles in both maturation and maintenance of the central nervous system and male reproductive system. Involved in PLA2G3-dependent maturation of mast cells. PLA2G3 is secreted by immature mast cells and acts on nearby fibroblasts upstream to PTDGS to synthesize PGD2, which in turn promotes mast cell maturation and degranulation via PTGDR. This chain is Prostaglandin-H2 D-isomerase (PTGDS), found in Sus scrofa (Pig).